The chain runs to 77 residues: Acyl carrier protein (77 aa).

Residues 2-77 (ADVMERVTKI…DVVDYINNNQ (76 aa)) enclose the Carrier domain. Serine 37 bears the O-(pantetheine 4'-phosphoryl)serine mark.

Belongs to the acyl carrier protein (ACP) family. Post-translationally, 4'-phosphopantetheine is transferred from CoA to a specific serine of apo-ACP by AcpS. This modification is essential for activity because fatty acids are bound in thioester linkage to the sulfhydryl of the prosthetic group.

It is found in the cytoplasm. The protein operates within lipid metabolism; fatty acid biosynthesis. Functionally, carrier of the growing fatty acid chain in fatty acid biosynthesis. This Shouchella clausii (strain KSM-K16) (Alkalihalobacillus clausii) protein is Acyl carrier protein.